A 482-amino-acid chain; its full sequence is UDP-N-acetylmuramate--L-alanine ligase (482 aa).

An ATP-binding site is contributed by 123–129; it reads GTHGKTT.

It belongs to the MurCDEF family.

It is found in the cytoplasm. The catalysed reaction is UDP-N-acetyl-alpha-D-muramate + L-alanine + ATP = UDP-N-acetyl-alpha-D-muramoyl-L-alanine + ADP + phosphate + H(+). It participates in cell wall biogenesis; peptidoglycan biosynthesis. Its function is as follows. Cell wall formation. The protein is UDP-N-acetylmuramate--L-alanine ligase of Pseudomonas putida (strain GB-1).